The sequence spans 294 residues: ATP phosphoribosyltransferase (294 aa).

It belongs to the ATP phosphoribosyltransferase family. Long subfamily. Mg(2+) serves as cofactor.

The protein resides in the cytoplasm. The enzyme catalyses 1-(5-phospho-beta-D-ribosyl)-ATP + diphosphate = 5-phospho-alpha-D-ribose 1-diphosphate + ATP. It functions in the pathway amino-acid biosynthesis; L-histidine biosynthesis; L-histidine from 5-phospho-alpha-D-ribose 1-diphosphate: step 1/9. Feedback inhibited by histidine. Catalyzes the condensation of ATP and 5-phosphoribose 1-diphosphate to form N'-(5'-phosphoribosyl)-ATP (PR-ATP). Has a crucial role in the pathway because the rate of histidine biosynthesis seems to be controlled primarily by regulation of HisG enzymatic activity. This chain is ATP phosphoribosyltransferase, found in Chlorobium chlorochromatii (strain CaD3).